We begin with the raw amino-acid sequence, 323 residues long: Tetraacyldisaccharide 4'-kinase (323 aa).

Residue 56–63 (TVGGVGKT) coordinates ATP.

This sequence belongs to the LpxK family.

The catalysed reaction is a lipid A disaccharide + ATP = a lipid IVA + ADP + H(+). The protein operates within glycolipid biosynthesis; lipid IV(A) biosynthesis; lipid IV(A) from (3R)-3-hydroxytetradecanoyl-[acyl-carrier-protein] and UDP-N-acetyl-alpha-D-glucosamine: step 6/6. In terms of biological role, transfers the gamma-phosphate of ATP to the 4'-position of a tetraacyldisaccharide 1-phosphate intermediate (termed DS-1-P) to form tetraacyldisaccharide 1,4'-bis-phosphate (lipid IVA). The sequence is that of Tetraacyldisaccharide 4'-kinase from Legionella pneumophila (strain Corby).